Consider the following 132-residue polypeptide: Small ribosomal subunit protein uS8 (132 aa).

The protein belongs to the universal ribosomal protein uS8 family. In terms of assembly, part of the 30S ribosomal subunit. Contacts proteins S5 and S12.

Its function is as follows. One of the primary rRNA binding proteins, it binds directly to 16S rRNA central domain where it helps coordinate assembly of the platform of the 30S subunit. The chain is Small ribosomal subunit protein uS8 from Geobacillus thermodenitrificans (strain NG80-2).